Here is a 242-residue protein sequence, read N- to C-terminus: UPF0246 protein SP70585_1589 (242 aa).

Belongs to the UPF0246 family.

This chain is UPF0246 protein SP70585_1589, found in Streptococcus pneumoniae (strain 70585).